The sequence spans 133 residues: Cytochrome b5 (133 aa).

In terms of domain architecture, Cytochrome b5 heme-binding spans 4-86 (EKEYILDEIS…LKNYLVGNFK (83 aa)). Positions 45 and 69 each coordinate heme. Residues 108–128 (SGTGIMLIVLMALFAIAYGYY) form a helical membrane-spanning segment.

It belongs to the cytochrome b5 family. Interacts with alternative squalene epoxidase PHATRDRAFT_45494.

It localises to the endoplasmic reticulum membrane. Hemoprotein that functions as an electron carrier for membrane bound monooxygenases involved in sterol biosynthesis. The sequence is that of Cytochrome b5 from Phaeodactylum tricornutum (strain CCAP 1055/1).